A 395-amino-acid polypeptide reads, in one-letter code: Xylose isomerase (395 aa).

Residues His54 and Asp57 contribute to the active site. Positions 181, 217, 220, 245, 255, 257, and 293 each coordinate Mg(2+).

This sequence belongs to the xylose isomerase family. As to quaternary structure, homotetramer. The cofactor is Mg(2+).

The protein localises to the cytoplasm. The enzyme catalyses alpha-D-xylose = alpha-D-xylulofuranose. The sequence is that of Xylose isomerase from Pseudarthrobacter chlorophenolicus (strain ATCC 700700 / DSM 12829 / CIP 107037 / JCM 12360 / KCTC 9906 / NCIMB 13794 / A6) (Arthrobacter chlorophenolicus).